We begin with the raw amino-acid sequence, 180 residues long: Translation initiation factor IF-3 (180 aa).

It belongs to the IF-3 family. In terms of assembly, monomer.

It is found in the cytoplasm. Functionally, IF-3 binds to the 30S ribosomal subunit and shifts the equilibrium between 70S ribosomes and their 50S and 30S subunits in favor of the free subunits, thus enhancing the availability of 30S subunits on which protein synthesis initiation begins. The polypeptide is Translation initiation factor IF-3 (Hyphomonas neptunium (strain ATCC 15444)).